The primary structure comprises 81 residues: Small ribosomal subunit protein uS17 (81 aa).

This sequence belongs to the universal ribosomal protein uS17 family. As to quaternary structure, part of the 30S ribosomal subunit.

Its function is as follows. One of the primary rRNA binding proteins, it binds specifically to the 5'-end of 16S ribosomal RNA. This is Small ribosomal subunit protein uS17 from Methylocella silvestris (strain DSM 15510 / CIP 108128 / LMG 27833 / NCIMB 13906 / BL2).